The primary structure comprises 516 residues: Probable inorganic phosphate transporter 1-6 (516 aa).

Residue Ala-2 is modified to N-acetylalanine. The Cytoplasmic segment spans residues 2–25; sequence ANEEQGSILKALDVAKTQWYHVTA. Residues 26 to 46 form a helical membrane-spanning segment; that stretch reads VVVSGMGFFTDSYDLFVISLI. Over 47–71 the chain is Extracellular; that stretch reads TKLLGRIYYQVPGSSSPGSLPDGIS. Residues 72–92 form a helical membrane-spanning segment; that stretch reads AAVSGVAFAGTFIGQIFFGCL. Residues 93 to 100 are Cytoplasmic-facing; it reads GDKLGRKR. Residues 101 to 121 traverse the membrane as a helical segment; that stretch reads VYGLTLLIMTICSICSGLSLG. Over 122-132 the chain is Extracellular; it reads RDPKTVMVTLC. Residues 133–153 form a helical membrane-spanning segment; that stretch reads FFRFWLGFGIGGDYPLSATIM. Topologically, residues 154–162 are cytoplasmic; sequence SEYSNKRTR. A helical membrane pass occupies residues 163–183; the sequence is GAFIAAVFGMQGIGILAAGAV. At 184-212 the chain is on the extracellular side; the sequence is SLLVSAVFESKFPSRAYILDGAASTVPQA. Residues 213–233 traverse the membrane as a helical segment; it reads DYVWRIILMVGALPALLTYYW. The Cytoplasmic portion of the chain corresponds to 234 to 293; sequence RMKMPETARYTALVSKNAEQAALDMTKVLNVDIEASAAKNDQARVSSDEFGLFSMKFLRR. Residues 294 to 314 form a helical membrane-spanning segment; sequence HGLHLLGTASTWFLLDIAFYS. Residues 315–349 are Extracellular-facing; it reads QNLFQKDIFTTIGWLPSAKTMNAIQELYMIAKAQT. A helical membrane pass occupies residues 350–370; it reads IIACCSTVPGYFFTVGFIDYM. The Cytoplasmic segment spans residues 371–374; the sequence is GRKK. Residues 375 to 395 form a helical membrane-spanning segment; the sequence is IQIMGFAMMTIFMLSLAIPYH. Residues 396–403 lie on the Extracellular side of the membrane; sequence HWTLPANR. The chain crosses the membrane as a helical span at residues 404-424; the sequence is IGFVVLYSFTFFFSNFGPNAT. The Cytoplasmic segment spans residues 425–442; it reads TFIVPAEIFPARIRSTCH. Residues 443 to 463 traverse the membrane as a helical segment; sequence GISAASGKAGAMVGSFGFSAL. Over 464-471 the chain is Extracellular; sequence VKALGMSN. A helical membrane pass occupies residues 472-492; it reads TLYIMAGINLLGLLLTFTIPE. The Cytoplasmic portion of the chain corresponds to 493–516; the sequence is TNGKSLEELSGETEPEKIKEKIVV.

The protein belongs to the major facilitator superfamily. Phosphate:H(+) symporter (TC 2.A.1.9) family. Expressed in anthers, tapetumand mature pollen and, to a lower extent, in hydathodes and vascular tissues of cotyledons of flowering plants.

The protein localises to the membrane. Its function is as follows. High-affinity transporter for external inorganic phosphate. The sequence is that of Probable inorganic phosphate transporter 1-6 (PHT1-6) from Arabidopsis thaliana (Mouse-ear cress).